The primary structure comprises 50 residues: Peroxiredoxin-6 (50 aa).

Residues 1–50 (DFTPVCTTELGRLAPEFAKRVVFIFGPDKKLKLSILYPATTGRNFDEILR) form the Thioredoxin domain. Thr3 is subject to Phosphothreonine. Residue Cys6 is the Cysteine sulfenic acid (-SOH) intermediate; for peroxidase activity of the active site. Position 19 is an N6-acetyllysine (Lys19). Residue Asp28 is the For phospholipase activity of the active site.

The protein belongs to the peroxiredoxin family. Prx6 subfamily. As to quaternary structure, homodimer. Interacts with GSTP1; mediates PRDX6 glutathionylation and regeneration. Interacts with APEX1. Interacts with STH. May interact with FAM168B. May interact with HTR2A. Post-translationally, irreversibly inactivated by overoxidation of Cys-6 to sulfinic acid (Cys-SO(2)H) and sulfonic acid (Cys-SO(3)H) forms upon oxidative stress. Phosphorylation at Thr-177 by MAP kinases increases the phospholipase activity of the enzyme. The phosphorylated form exhibits a greater lysophosphatidylcholine acyltransferase activity compared to the non-phosphorylated form.

The protein localises to the cytoplasm. It localises to the lysosome. The catalysed reaction is a hydroperoxide + 2 glutathione = an alcohol + glutathione disulfide + H2O. It catalyses the reaction a 1,2-diacyl-sn-glycero-3-phosphocholine + H2O = a 1-acyl-sn-glycero-3-phosphocholine + a fatty acid + H(+). The enzyme catalyses a 1-acyl-sn-glycero-3-phosphocholine + an acyl-CoA = a 1,2-diacyl-sn-glycero-3-phosphocholine + CoA. It carries out the reaction 1-hexadecanoyl-sn-glycero-3-phosphocholine + hexadecanoyl-CoA = 1,2-dihexadecanoyl-sn-glycero-3-phosphocholine + CoA. The catalysed reaction is 1,2-dihexadecanoyl-sn-glycero-3-phosphocholine + H2O = 1-hexadecanoyl-sn-glycero-3-phosphocholine + hexadecanoate + H(+). Functionally, thiol-specific peroxidase that catalyzes the reduction of hydrogen peroxide and organic hydroperoxides to water and alcohols, respectively. Can reduce H(2)O(2) and short chain organic, fatty acid, and phospholipid hydroperoxides. Also has phospholipase activity, and can therefore either reduce the oxidized sn-2 fatty acyl group of phospholipids (peroxidase activity) or hydrolyze the sn-2 ester bond of phospholipids (phospholipase activity). These activities are dependent on binding to phospholipids at acidic pH and to oxidized phospholipds at cytosolic pH. Plays a role in cell protection against oxidative stress by detoxifying peroxides and in phospholipid homeostasis. Exhibits acyl-CoA-dependent lysophospholipid acyltransferase which mediates the conversion of lysophosphatidylcholine (1-acyl-sn-glycero-3-phosphocholine or LPC) into phosphatidylcholine (1,2-diacyl-sn-glycero-3-phosphocholine or PC). Shows a clear preference for LPC as the lysophospholipid and for palmitoyl CoA as the fatty acyl substrate. The chain is Peroxiredoxin-6 from Mesocricetus auratus (Golden hamster).